The following is a 370-amino-acid chain: MAPKLQAQFDAVKVLNDTQSKFEMVQILDENGNVVNEDLVPDLTDEQLVELMERMVWTRILDQRSISLNRQGRLGFYAPTAGQEASQLASQYALEKEDYILPGYRDVPQIIWHGLPLTEAFLFSRGHFKGNQFPEGVNALSPQIIIGAQYIQAAGVAFALKKRGKNAVAITYTGDGGSSQGDFYEGINFAAAYKAPAIFVIQNNNYAISTPRSKQTAAETLAQKAIAVGIPGIQVDGMDALAVYQATKEARDRAVAGEGPTLIETMTYRYGPHTMAGDDPTRYRTSDEDAEWEKKDPLVRFRKFLENKGLWNEDKENEVIERAKADIKAAIKEADNTEKQTVTSLMEIMYEDMPQNLAEQYEIYKEKESK.

In terms of assembly, heterodimer of an alpha and a beta chain. The cofactor is thiamine diphosphate.

The enzyme catalyses N(6)-[(R)-lipoyl]-L-lysyl-[protein] + pyruvate + H(+) = N(6)-[(R)-S(8)-acetyldihydrolipoyl]-L-lysyl-[protein] + CO2. Its function is as follows. The pyruvate dehydrogenase complex catalyzes the overall conversion of pyruvate to acetyl-CoA and CO(2). It contains multiple copies of three enzymatic components: pyruvate dehydrogenase (E1), dihydrolipoamide acetyltransferase (E2) and lipoamide dehydrogenase (E3). This Staphylococcus aureus (strain COL) protein is Pyruvate dehydrogenase E1 component subunit alpha (pdhA).